A 913-amino-acid polypeptide reads, in one-letter code: DNA polymerase I (913 aa).

The region spanning Met1 to Pro305 is the 5'-3' exonuclease domain. In terms of domain architecture, 3'-5' exonuclease spans Ile306–Glu501. Positions Ser505–His913 are polymerase.

The protein belongs to the DNA polymerase type-A family. In terms of assembly, single-chain monomer with multiple functions.

The catalysed reaction is DNA(n) + a 2'-deoxyribonucleoside 5'-triphosphate = DNA(n+1) + diphosphate. Its function is as follows. In addition to polymerase activity, this DNA polymerase exhibits 3'-5' and 5'-3' exonuclease activity. In Pseudomonas aeruginosa (strain ATCC 15692 / DSM 22644 / CIP 104116 / JCM 14847 / LMG 12228 / 1C / PRS 101 / PAO1), this protein is DNA polymerase I (polA).